The chain runs to 139 residues: Large ribosomal subunit protein uL13 (139 aa).

The protein belongs to the universal ribosomal protein uL13 family. In terms of assembly, part of the 50S ribosomal subunit.

This protein is one of the early assembly proteins of the 50S ribosomal subunit, although it is not seen to bind rRNA by itself. It is important during the early stages of 50S assembly. In Wolinella succinogenes (strain ATCC 29543 / DSM 1740 / CCUG 13145 / JCM 31913 / LMG 7466 / NCTC 11488 / FDC 602W) (Vibrio succinogenes), this protein is Large ribosomal subunit protein uL13.